The following is a 345-amino-acid chain: Inositol 2-dehydrogenase (345 aa).

This sequence belongs to the Gfo/Idh/MocA family. Homotetramer.

It catalyses the reaction myo-inositol + NAD(+) = scyllo-inosose + NADH + H(+). Its function is as follows. Involved in the oxidation of myo-inositol (MI) to 2-keto-myo-inositol (2KMI or 2-inosose). This is Inositol 2-dehydrogenase from Mycolicibacterium smegmatis (strain ATCC 700084 / mc(2)155) (Mycobacterium smegmatis).